Here is a 950-residue protein sequence, read N- to C-terminus: Glycine dehydrogenase (decarboxylating) (950 aa).

K699 is modified (N6-(pyridoxal phosphate)lysine).

This sequence belongs to the GcvP family. The glycine cleavage system is composed of four proteins: P, T, L and H. Pyridoxal 5'-phosphate is required as a cofactor.

It catalyses the reaction N(6)-[(R)-lipoyl]-L-lysyl-[glycine-cleavage complex H protein] + glycine + H(+) = N(6)-[(R)-S(8)-aminomethyldihydrolipoyl]-L-lysyl-[glycine-cleavage complex H protein] + CO2. Functionally, the glycine cleavage system catalyzes the degradation of glycine. The P protein binds the alpha-amino group of glycine through its pyridoxal phosphate cofactor; CO(2) is released and the remaining methylamine moiety is then transferred to the lipoamide cofactor of the H protein. This chain is Glycine dehydrogenase (decarboxylating), found in Chromobacterium violaceum (strain ATCC 12472 / DSM 30191 / JCM 1249 / CCUG 213 / NBRC 12614 / NCIMB 9131 / NCTC 9757 / MK).